A 318-amino-acid polypeptide reads, in one-letter code: Oxidoreductase swnN (318 aa).

Belongs to the NmrA-type oxidoreductase family. Isoflavone reductase subfamily.

The protein operates within mycotoxin biosynthesis. Its function is as follows. Aminotransferase; part of the gene cluster that mediates the biosynthesis of swainsonine (SW), a cytotoxic fungal alkaloid and a potential cancer therapy drug. Swainsonine production occurs via a multibranched pathway and is dispensable for fungal colonization of plants and infection of insect hosts. The first step of swainsonine biosynthesis is the production of the precursor pipecolic acid (PA) via conversion of L-lysine (Lys) to 1-piperideine-6-carboxylate (P6C) by the aminotransferase swnA, the latter being further reduced to PA by the reductase swnR. The PKS-NRPS hybrid synthetase swnK uptakes and condensates PA and malonyl-CoA with and without skipping of the ketoreductase (KR) domain in order to produce 3 intermediates, 1-oxoindolizidine, (1S)-1-hydroxyindolizin, and (1R)-1-hydroxyindolizine; with the transisomer (1S)-1-hydroxyindolizin being predominant. The terminal thioester reductase (TE) domain of swnK is involved in reduction of the thioester bond to release the intermediate aldehydes. The oxidoreductase swnN could contribute to the reduction of 1-oxoindolizidine to (1S)-1-hydroxyindolizin and (1R)-1-hydroxyindolizine, contributing to the major route of SW production. The dioxygenase swnH2 would be responsible for the oxidization of (1R)-1-hydroxyindolizine into (1R,2S)-1,2-dihydroxyindolizine and of (1S)-1-hydroxyindolizin to yield both (1R,2S)-1,2-dihydroxyindolizine and (1S,2S)-1,2-dihydroxyindolizine. The dioxygenase swnH1 then performs the conversion of the 1,2-dihydroxyindolizine epimers to SW. The chain is Oxidoreductase swnN from Arthroderma benhamiae (strain ATCC MYA-4681 / CBS 112371) (Trichophyton mentagrophytes).